The sequence spans 118 residues: Non-specific lipid-transfer protein 1 (118 aa).

A signal peptide spans 1–25 (MAGVMKLACLLLACMIVAGPITSNA). 4 cysteine pairs are disulfide-bonded: Cys-29-Cys-76, Cys-39-Cys-53, Cys-54-Cys-100, and Cys-74-Cys-114.

Belongs to the plant LTP family. As to expression, expressed primarily in epidermal cells.

It is found in the secreted. The protein resides in the cell wall. In terms of biological role, plant non-specific lipid-transfer proteins transfer phospholipids as well as galactolipids across membranes. May play a role in wax or cutin deposition in the cell walls of expanding epidermal cells and certain secretory tissues. The protein is Non-specific lipid-transfer protein 1 (LTP1) of Arabidopsis thaliana (Mouse-ear cress).